Reading from the N-terminus, the 301-residue chain is MTTTSIDPPVYATVDVIREPKAYDGMPKKDECRLPSYSERAITKPVEARKLIRNRLMTKSTTGWCEGYIQANLLVLPAKYRDDFVNLCVRNPVPCPLLGETEIGKPTEFKPEALAKQSNVATDIPFYCEYINGKFSRELENISKEWTEDYVGFLIGCSFSFEAALVAENFIPRHLPTGDAPPMFITNIPLCASGVFTGTFVVSMRPYPEKDLERIRKITSAYTNCHGEPVAWGWDGAKKIGVKDCGKPDFGVPVEFKEGEIPIFWGCGVTPQNVVMMSKLPEPVYSHKPGYMYLTDLTHNC.

This sequence belongs to the D-glutamate cyclase family.

In Schizosaccharomyces pombe (strain 972 / ATCC 24843) (Fission yeast), this protein is Putative hydro-lyase C5H10.01.